Here is a 427-residue protein sequence, read N- to C-terminus: Trigger factor (427 aa).

Positions 160 to 240 (TDTVIGDVEK…VKEVKRLELP (81 aa)) constitute a PPIase FKBP-type domain.

The protein belongs to the FKBP-type PPIase family. Tig subfamily.

Its subcellular location is the cytoplasm. The enzyme catalyses [protein]-peptidylproline (omega=180) = [protein]-peptidylproline (omega=0). Functionally, involved in protein export. Acts as a chaperone by maintaining the newly synthesized protein in an open conformation. Functions as a peptidyl-prolyl cis-trans isomerase. In Chlorobium phaeobacteroides (strain DSM 266 / SMG 266 / 2430), this protein is Trigger factor.